A 90-amino-acid chain; its full sequence is Translation initiation factor IF-1 (90 aa).

The S1-like domain occupies 7–76 (KEDVIRMEGT…TRGRIVYRKK (70 aa)).

This sequence belongs to the IF-1 family. Component of the 30S ribosomal translation pre-initiation complex which assembles on the 30S ribosome in the order IF-2 and IF-3, IF-1 and N-formylmethionyl-tRNA(fMet); mRNA recruitment can occur at any time during PIC assembly.

Its subcellular location is the cytoplasm. In terms of biological role, one of the essential components for the initiation of protein synthesis. Stabilizes the binding of IF-2 and IF-3 on the 30S subunit to which N-formylmethionyl-tRNA(fMet) subsequently binds. Helps modulate mRNA selection, yielding the 30S pre-initiation complex (PIC). Upon addition of the 50S ribosomal subunit IF-1, IF-2 and IF-3 are released leaving the mature 70S translation initiation complex. This Fervidobacterium nodosum (strain ATCC 35602 / DSM 5306 / Rt17-B1) protein is Translation initiation factor IF-1.